The following is a 317-amino-acid chain: Protein CbxX, plasmid (317 aa).

85-92 (GNPGTGKT) contacts ATP.

It belongs to the CbxX/CfxQ family.

Functionally, seems to be necessary for the expression of RuBisCO. The sequence is that of Protein CbxX, plasmid (cbxXP) from Cupriavidus necator (strain ATCC 17699 / DSM 428 / KCTC 22496 / NCIMB 10442 / H16 / Stanier 337) (Ralstonia eutropha).